A 1410-amino-acid chain; its full sequence is DNA-directed RNA polymerase subunit beta' (1410 aa).

Residues C69, C71, C84, and C87 each coordinate Zn(2+). The Mg(2+) site is built by D461, D463, and D465. The Zn(2+) site is built by C810, C884, C891, and C894.

This sequence belongs to the RNA polymerase beta' chain family. In terms of assembly, the RNAP catalytic core consists of 2 alpha, 1 beta, 1 beta' and 1 omega subunit. When a sigma factor is associated with the core the holoenzyme is formed, which can initiate transcription. It depends on Mg(2+) as a cofactor. Requires Zn(2+) as cofactor.

The catalysed reaction is RNA(n) + a ribonucleoside 5'-triphosphate = RNA(n+1) + diphosphate. Its function is as follows. DNA-dependent RNA polymerase catalyzes the transcription of DNA into RNA using the four ribonucleoside triphosphates as substrates. This Ehrlichia chaffeensis (strain ATCC CRL-10679 / Arkansas) protein is DNA-directed RNA polymerase subunit beta'.